Consider the following 283-residue polypeptide: Pantothenate synthetase (283 aa).

31–38 contacts ATP; that stretch reads MGALHDGH. Catalysis depends on His-38, which acts as the Proton donor. A (R)-pantoate-binding site is contributed by Gln-62. Residue Gln-62 coordinates beta-alanine. Position 148–151 (148–151) interacts with ATP; that stretch reads GKKD. Gln-154 serves as a coordination point for (R)-pantoate. ATP contacts are provided by residues Ile-177 and 185–188; that span reads KSSR.

This sequence belongs to the pantothenate synthetase family. Homodimer.

Its subcellular location is the cytoplasm. It carries out the reaction (R)-pantoate + beta-alanine + ATP = (R)-pantothenate + AMP + diphosphate + H(+). The protein operates within cofactor biosynthesis; (R)-pantothenate biosynthesis; (R)-pantothenate from (R)-pantoate and beta-alanine: step 1/1. Functionally, catalyzes the condensation of pantoate with beta-alanine in an ATP-dependent reaction via a pantoyl-adenylate intermediate. The chain is Pantothenate synthetase from Oceanobacillus iheyensis (strain DSM 14371 / CIP 107618 / JCM 11309 / KCTC 3954 / HTE831).